The primary structure comprises 307 residues: MGSQLALKSRIRSTESLAKIFNAQEMIASSHIAKARDVALNAKPYTDAIFDAVQALVAHTHITHPIAVKDEKNPRVAVLALTSDRGMAGPYTSSIIRETESLLSRLDAAGKQPELFVYGRRGSTYYKYRNRDIAATWEGDTDQPGVEIAETISNTLMDAYMKPAEKGGVSELYIVYTEFINMVVQKVRVLRMLPVEIVKNETKVPDPDEEAPATADVAPLYTFEPSLEKVLDAILPKYIQSRIHECLLTAAASETASRQNAMHTATDNARNLIDDLTRKLNASRQASITQELTEIIGSADALTKKEE.

The protein belongs to the ATPase gamma chain family. F-type ATPases have 2 components, CF(1) - the catalytic core - and CF(0) - the membrane proton channel. CF(1) has five subunits: alpha(3), beta(3), gamma(1), delta(1), epsilon(1). CF(0) has three main subunits: a, b and c.

It is found in the cell membrane. Functionally, produces ATP from ADP in the presence of a proton gradient across the membrane. The gamma chain is believed to be important in regulating ATPase activity and the flow of protons through the CF(0) complex. The polypeptide is ATP synthase gamma chain (Bifidobacterium longum (strain DJO10A)).